We begin with the raw amino-acid sequence, 120 residues long: Small ribosomal subunit protein bS16 (120 aa).

A disordered region spans residues 84–120 (KRESRNNPQQGQPKKKAQERAAAAAAAAEKAASEAAA). Residues 103–120 (RAAAAAAAAEKAASEAAA) show a composition bias toward low complexity.

This sequence belongs to the bacterial ribosomal protein bS16 family.

In Beijerinckia indica subsp. indica (strain ATCC 9039 / DSM 1715 / NCIMB 8712), this protein is Small ribosomal subunit protein bS16.